We begin with the raw amino-acid sequence, 82 residues long: Large ribosomal subunit protein bL31B (82 aa).

It belongs to the bacterial ribosomal protein bL31 family. Type B subfamily. Part of the 50S ribosomal subunit.

This chain is Large ribosomal subunit protein bL31B, found in Dichelobacter nodosus (strain VCS1703A).